Consider the following 384-residue polypeptide: F-box only protein 5-B (384 aa).

Disordered regions lie at residues 1–20 (MMCG…KSSA) and 79–106 (DEEN…ETDS). Residues 9 to 19 (PSPKKLLSKSS) show a composition bias toward low complexity. Positions 83-99 (SSLQDSGYSSILQNDSP) are enriched in polar residues. The region spanning 191–238 (AELFHRDFKHLLTKILRHLNAMDLINVIGVSTTWRKILQKDNWAYNTY) is the F-box domain. Residues 311 to 359 (SLKACVDCGSPAKYDSYLHRAICTRESCKLDFCTLCSCKYHSSKSCLIS) form a ZBR-type zinc finger. The Zn(2+) site is built by Cys-315, Cys-318, Cys-333, Cys-338, Cys-343, Cys-346, His-351, and Cys-356.

Part of a SCF (SKP1-cullin-F-box) protein ligase complex. Interacts with btrc. Interacts with skp1. Interacts with cdc20. Interacts with pin1; stabilizes fbxo5 by preventing its association with btrc in an isomerization-dependent pathway; this interaction is present during G2 phase and prevents fbxo5 degradation. Interacts with plk1. Post-translationally, proteolysed; proteolysis is induced by both cyclin B-cdk1 and cyclin A-cdk1/2 complex through probable phosphorylation. Proteolysis is inhibited by pin1 during G2.

It localises to the nucleus. It is found in the cytoplasm. The protein localises to the cytoskeleton. Its subcellular location is the spindle. The protein resides in the microtubule organizing center. It localises to the centrosome. The protein operates within protein modification; protein ubiquitination. Functionally, regulates progression through early mitosis by inhibiting the anaphase promoting complex/cyclosome (APC). Binds to the APC activators cdc20 to prevent APC activation. Can also bind directly to the APC to inhibit substrate-binding. Required to arrest unfertilized eggs at metaphase of meiosis II, by preventing their release from metaphase of meiosis II, through inhibition of APC-dependent cyclin B destruction leading to stabilization of cyclin B-cdk1 complex activity. This Xenopus laevis (African clawed frog) protein is F-box only protein 5-B (fbxo5-b).